A 142-amino-acid chain; its full sequence is C-type lectin 13 (142 aa).

The N-terminal stretch at 1 to 23 (MGRLVFVSFGGWDVFLSLSGTGA) is a signal peptide. Intrachain disulfides connect Cys25–Cys36, Cys53–Cys138, and Cys115–Cys130. The C-type lectin domain occupies 32 to 139 (YEGHCYRVFQ…CSKTHNVVCK (108 aa)).

It belongs to the snaclec family. Heteromultimer; disulfide-linked. As to expression, expressed by the venom gland.

The protein resides in the secreted. Functionally, interferes with one step of hemostasis (modulation of platelet aggregation, or coagulation cascade, for example). In Crotalus adamanteus (Eastern diamondback rattlesnake), this protein is C-type lectin 13.